Consider the following 522-residue polypeptide: Sensory neuron membrane protein 1 (522 aa).

The Cytoplasmic segment spans residues 1 to 11; it reads MKLPKHLKFAA. The chain crosses the membrane as a helical span at residues 12–32; it reads GAGGAFLFGILFGWVMFPAIL. The Extracellular segment spans residues 33–455; it reads KGQLKKEMAL…KFQLFYPKKA (423 aa). Residues N67 and N229 are each glycosylated (N-linked (GlcNAc...) asparagine). 3 disulfide bridges follow: C268–C333, C297–C350, and C335–C339. N-linked (GlcNAc...) asparagine glycosylation occurs at N438. A helical membrane pass occupies residues 456–476; sequence VGVIKWLLVTFGGFGLIGCTI. Over 477–522 the chain is Cytoplasmic; that stretch reads YHYKDRIMSFASSPGSAAVTKVKPEEVEQKDVSVIGQPQEPAKINM.

Belongs to the CD36 family.

It localises to the cell membrane. Functionally, plays an olfactory role that is not restricted to pheromone sensitivity. This Plutella xylostella (Diamondback moth) protein is Sensory neuron membrane protein 1.